We begin with the raw amino-acid sequence, 301 residues long: Probable 5-dehydro-4-deoxyglucarate dehydratase (301 aa).

This sequence belongs to the DapA family.

The enzyme catalyses 5-dehydro-4-deoxy-D-glucarate + H(+) = 2,5-dioxopentanoate + CO2 + H2O. It participates in carbohydrate acid metabolism; D-glucarate degradation; 2,5-dioxopentanoate from D-glucarate: step 2/2. The sequence is that of Probable 5-dehydro-4-deoxyglucarate dehydratase from Cereibacter sphaeroides (strain KD131 / KCTC 12085) (Rhodobacter sphaeroides).